A 370-amino-acid polypeptide reads, in one-letter code: D-alanine--D-alanine ligase (370 aa).

The ATP-grasp domain occupies 144–352; the sequence is KKIFADAGIP…YGALIERLVD (209 aa). Residue 177–232 coordinates ATP; the sequence is EEVLTYPVFVKPANLGSSVGISKATNKKELADAMTEAFLYDRRVVVEQGVVAREIE. 3 residues coordinate Mg(2+): Asp306, Glu319, and Asn321.

It belongs to the D-alanine--D-alanine ligase family. Mg(2+) is required as a cofactor. The cofactor is Mn(2+).

The protein resides in the cytoplasm. The catalysed reaction is 2 D-alanine + ATP = D-alanyl-D-alanine + ADP + phosphate + H(+). It functions in the pathway cell wall biogenesis; peptidoglycan biosynthesis. Its function is as follows. Cell wall formation. This chain is D-alanine--D-alanine ligase, found in Listeria monocytogenes serotype 4b (strain F2365).